The chain runs to 108 residues: uncharacterized protein (108 aa).

Residues 72–94 (LGLHTSVFFFLRIVCMSSAASVF) form a helical membrane-spanning segment.

It localises to the membrane. This is an uncharacterized protein from Saccharomyces cerevisiae (strain ATCC 204508 / S288c) (Baker's yeast).